The following is a 498-amino-acid chain: Glycerol kinase 1 (498 aa).

ADP is bound at residue Thr-12. ATP-binding residues include Thr-12, Thr-13, and Ser-14. A sn-glycerol 3-phosphate-binding site is contributed by Thr-12. Arg-16 provides a ligand contact to ADP. Arg-82, Glu-83, Tyr-134, and Asp-243 together coordinate sn-glycerol 3-phosphate. Residues Arg-82, Glu-83, Tyr-134, Asp-243, and Gln-244 each contribute to the glycerol site. Thr-265 and Gly-308 together coordinate ADP. Positions 265, 308, 312, and 409 each coordinate ATP. ADP is bound by residues Gly-409 and Asn-413.

The protein belongs to the FGGY kinase family. In terms of assembly, homotetramer and homodimer (in equilibrium).

The catalysed reaction is glycerol + ATP = sn-glycerol 3-phosphate + ADP + H(+). The protein operates within polyol metabolism; glycerol degradation via glycerol kinase pathway; sn-glycerol 3-phosphate from glycerol: step 1/1. Its activity is regulated as follows. Activated by phosphorylation and inhibited by fructose 1,6-bisphosphate (FBP). Functionally, key enzyme in the regulation of glycerol uptake and metabolism. Catalyzes the phosphorylation of glycerol to yield sn-glycerol 3-phosphate. The protein is Glycerol kinase 1 of Clostridium tetani (strain Massachusetts / E88).